The chain runs to 321 residues: tRNA uridine(34) hydroxylase (321 aa).

The 99-residue stretch at 135-233 (DDPLTLVIDT…YLEEVPENES (99 aa)) folds into the Rhodanese domain. Catalysis depends on Cys-193, which acts as the Cysteine persulfide intermediate.

It belongs to the TrhO family.

It carries out the reaction uridine(34) in tRNA + AH2 + O2 = 5-hydroxyuridine(34) in tRNA + A + H2O. Its function is as follows. Catalyzes oxygen-dependent 5-hydroxyuridine (ho5U) modification at position 34 in tRNAs. This Prochlorococcus marinus (strain SARG / CCMP1375 / SS120) protein is tRNA uridine(34) hydroxylase.